The primary structure comprises 149 residues: MKLILTAPVAKLGVPGDIVEVKDGYGRNYLLPQNYAIKWTRGAEAQIKDITRARKAKEIKSKEEAEQIRSQLEHLVVQVTVQVGENGRLFGAVTPGDIALAVRKAGGPALEKRSIEITKPIKTIGKHTVGVKLHDAIKGHVTVETVPAA.

This sequence belongs to the bacterial ribosomal protein bL9 family.

Binds to the 23S rRNA. The sequence is that of Large ribosomal subunit protein bL9 from Cutibacterium acnes (strain DSM 16379 / KPA171202) (Propionibacterium acnes).